The primary structure comprises 376 residues: Chaperone protein DnaJ (376 aa).

In terms of domain architecture, J spans 5 to 70; sequence DYYETLGVQK…EKRAAYDQYG (66 aa). The CR-type zinc finger occupies 133–211; it reads GTTKDIKINT…CHGDGRVHKK (79 aa). Residues cysteine 146, cysteine 149, cysteine 163, cysteine 166, cysteine 185, cysteine 188, cysteine 199, and cysteine 202 each coordinate Zn(2+). 4 CXXCXGXG motif repeats span residues 146 to 153, 163 to 170, 185 to 192, and 199 to 206; these read CDHCDGSG, CPTCHGHG, CPTCQGSG, and CKHCHGDG.

It belongs to the DnaJ family. As to quaternary structure, homodimer. Zn(2+) serves as cofactor.

It localises to the cytoplasm. Functionally, participates actively in the response to hyperosmotic and heat shock by preventing the aggregation of stress-denatured proteins and by disaggregating proteins, also in an autonomous, DnaK-independent fashion. Unfolded proteins bind initially to DnaJ; upon interaction with the DnaJ-bound protein, DnaK hydrolyzes its bound ATP, resulting in the formation of a stable complex. GrpE releases ADP from DnaK; ATP binding to DnaK triggers the release of the substrate protein, thus completing the reaction cycle. Several rounds of ATP-dependent interactions between DnaJ, DnaK and GrpE are required for fully efficient folding. Also involved, together with DnaK and GrpE, in the DNA replication of plasmids through activation of initiation proteins. The sequence is that of Chaperone protein DnaJ from Mannheimia succiniciproducens (strain KCTC 0769BP / MBEL55E).